We begin with the raw amino-acid sequence, 265 residues long: Enolase-phosphatase E1 (265 aa).

Residues Asp-18 and Glu-20 each coordinate Mg(2+). Substrate is bound by residues 144 to 145 and Lys-188; that span reads SS. Asp-215 is a binding site for Mg(2+).

This sequence belongs to the HAD-like hydrolase superfamily. MasA/MtnC family. As to quaternary structure, monomer. It depends on Mg(2+) as a cofactor.

It localises to the cytoplasm. The protein resides in the nucleus. It catalyses the reaction 5-methylsulfanyl-2,3-dioxopentyl phosphate + H2O = 1,2-dihydroxy-5-(methylsulfanyl)pent-1-en-3-one + phosphate. It participates in amino-acid biosynthesis; L-methionine biosynthesis via salvage pathway; L-methionine from S-methyl-5-thio-alpha-D-ribose 1-phosphate: step 3/6. Its pathway is amino-acid biosynthesis; L-methionine biosynthesis via salvage pathway; L-methionine from S-methyl-5-thio-alpha-D-ribose 1-phosphate: step 4/6. Functionally, bifunctional enzyme that catalyzes the enolization of 2,3-diketo-5-methylthiopentyl-1-phosphate (DK-MTP-1-P) into the intermediate 2-hydroxy-3-keto-5-methylthiopentenyl-1-phosphate (HK-MTPenyl-1-P), which is then dephosphorylated to form the acireductone 1,2-dihydroxy-3-keto-5-methylthiopentene (DHK-MTPene). The sequence is that of Enolase-phosphatase E1 from Candida albicans (strain SC5314 / ATCC MYA-2876) (Yeast).